Reading from the N-terminus, the 368-residue chain is Seipin-1 (368 aa).

Helical transmembrane passes span 26–46 (WFMV…VVLS), 101–121 (VMVL…SLYV), and 292–312 (LCVW…LWCF). A disordered region spans residues 344-368 (MERRRRERRNQPRRRNFATTQKSYT). Residues 346–359 (RRRRERRNQPRRRN) show a composition bias toward basic residues.

Belongs to the seipin family. As to expression, expressed in seeds and young seedlings. Not detected in leaves.

It is found in the endoplasmic reticulum membrane. Its function is as follows. Involved in lipid metabolism and lipid droplet (LD) morphology, number, and size. Facilitates the formation of large-sized LDs and modulates triacylglycerol accumulation. Induces probably a reorganization of the endoplasmic reticulum into LD-forming domains. The polypeptide is Seipin-1 (Arabidopsis thaliana (Mouse-ear cress)).